A 443-amino-acid polypeptide reads, in one-letter code: Phosphoglucosamine mutase (443 aa).

S101 acts as the Phosphoserine intermediate in catalysis. Mg(2+)-binding residues include S101, D239, D241, and D243. Residue S101 is modified to Phosphoserine.

This sequence belongs to the phosphohexose mutase family. Mg(2+) is required as a cofactor. Activated by phosphorylation.

It catalyses the reaction alpha-D-glucosamine 1-phosphate = D-glucosamine 6-phosphate. Functionally, catalyzes the conversion of glucosamine-6-phosphate to glucosamine-1-phosphate. The polypeptide is Phosphoglucosamine mutase (Francisella tularensis subsp. novicida (strain U112)).